A 360-amino-acid chain; its full sequence is NAD(P)H-quinone oxidoreductase subunit 1, chloroplastic (360 aa).

The next 9 helical transmembrane spans lie at 27 to 47 (IWIFVPIFSLVLGIITGVLVI), 98 to 118 (FSIGPSIAVISILLSYSVIPF), 129 to 149 (IGIFLWIAISSIAPIGLLMSG), 165 to 185 (AAQSISYEIPLTLCVLSISLL), 203 to 223 (FWGWNLWRQPIGFIIFLISSL), 248 to 268 (YSGIKFGLFYVASYLNLLISS), 269 to 289 (LFVTVLYLGGWNISIPYISIL), 297 to 317 (IFGTTIGIFITLAKTYLFLFI), and 340 to 360 (FLLPISLGNLLLTTSFQLFSL).

Belongs to the complex I subunit 1 family. NDH is composed of at least 16 different subunits, 5 of which are encoded in the nucleus.

The protein resides in the plastid. It localises to the chloroplast thylakoid membrane. It catalyses the reaction a plastoquinone + NADH + (n+1) H(+)(in) = a plastoquinol + NAD(+) + n H(+)(out). The catalysed reaction is a plastoquinone + NADPH + (n+1) H(+)(in) = a plastoquinol + NADP(+) + n H(+)(out). In terms of biological role, NDH shuttles electrons from NAD(P)H:plastoquinone, via FMN and iron-sulfur (Fe-S) centers, to quinones in the photosynthetic chain and possibly in a chloroplast respiratory chain. The immediate electron acceptor for the enzyme in this species is believed to be plastoquinone. Couples the redox reaction to proton translocation, and thus conserves the redox energy in a proton gradient. The protein is NAD(P)H-quinone oxidoreductase subunit 1, chloroplastic of Nasturtium officinale (Watercress).